We begin with the raw amino-acid sequence, 154 residues long: CASP-like protein ARALYDRAFT_485429 (154 aa).

Over 1 to 12 the chain is Cytoplasmic; sequence MENVPGSFGTSA. The chain crosses the membrane as a helical span at residues 13–33; it reads SFALRFGQTIFSAASLIFMCF. Over 34 to 41 the chain is Extracellular; sequence DYDFYDFT. Residues 42–62 form a helical membrane-spanning segment; sequence TFCYLATVMAIVTPWSILLAL. Residues 63-81 are Cytoplasmic-facing; it reads TDTYSVLVKLLPQELRVLS. Residues 82–102 form a helical membrane-spanning segment; sequence IVFAGDFVLSFLSLGGACAVA. The Extracellular segment spans residues 103-128; the sequence is SATELLASADGKICDGNLCIQYQVSA. A helical transmembrane segment spans residues 129–149; sequence ALAFLCWFLLLASALFNFWSL. At 150–154 the chain is on the cytoplasmic side; sequence PSLYY.

This sequence belongs to the Casparian strip membrane proteins (CASP) family. As to quaternary structure, homodimer and heterodimers.

It localises to the cell membrane. This Arabidopsis lyrata subsp. lyrata (Lyre-leaved rock-cress) protein is CASP-like protein ARALYDRAFT_485429.